Here is a 623-residue protein sequence, read N- to C-terminus: Phosphomethylpyrimidine synthase (623 aa).

Substrate contacts are provided by residues Asn221, Met250, Tyr279, His315, 335–337 (SRG), 376–379 (DGLR), and Glu415. Position 419 (His419) interacts with Zn(2+). Tyr442 provides a ligand contact to substrate. His483 provides a ligand contact to Zn(2+). 3 residues coordinate [4Fe-4S] cluster: Cys563, Cys566, and Cys571.

This sequence belongs to the ThiC family. Homodimer. [4Fe-4S] cluster serves as cofactor.

The catalysed reaction is 5-amino-1-(5-phospho-beta-D-ribosyl)imidazole + S-adenosyl-L-methionine = 4-amino-2-methyl-5-(phosphooxymethyl)pyrimidine + CO + 5'-deoxyadenosine + formate + L-methionine + 3 H(+). It participates in cofactor biosynthesis; thiamine diphosphate biosynthesis. Functionally, catalyzes the synthesis of the hydroxymethylpyrimidine phosphate (HMP-P) moiety of thiamine from aminoimidazole ribotide (AIR) in a radical S-adenosyl-L-methionine (SAM)-dependent reaction. The chain is Phosphomethylpyrimidine synthase from Parvibaculum lavamentivorans (strain DS-1 / DSM 13023 / NCIMB 13966).